A 1087-amino-acid polypeptide reads, in one-letter code: MTSGNVMLKHQDVTIERIEKFLSDTYFVRENLYGKLISLKSSEAVKVKVSPKVEGISYKDAIQLEYKDTKIGESFGPSWTNYWFKVTIDVPTDWKDKTIHFIWNSSCEGLIWMNGIAIQGLIGGTWQDLREEYKLIENSKGGEHFEFYIEISCNGMFGVGKDGLINPCDPDRTFELTKAEIRVKNKEANELYMYLQMLYDVGKNFPKESLRKKQAIWVANDIINQCNVNDSRTFSKCIELAKKEFFSQHNSESQTRVWAVGHCHIDLCWLWSFEKTKEKCARSFSTQILYMDYYPQFKFTQSQAQAYQWTKENYPELYERIKEKVVTGQFIPTGGTWVEMDGNLPSGESFIRQFLYGQRFFEKEFGKKCTEFFLPDTFGYSAQLPQVIRHMGIENFITQKLSWNNLNKFPHSTFIWEGIDGSSVLTHFPPADTYNSQADVKEIVMSSSNNKDIDRCNESMLLYGNGDGGGGPTIPMIERLTILKDTAGIPKIEFSTPAQFFKQLEPHRSKLNKWVGELYFELHRGTYTSQATTKRGNRLCEIELHATEMLTSYCELFVEGFKSPNLSKLWQQVLLCQFHDALPGSSIQVCYEDILKIHQQVLVECKNIITQSMNHITGTLLKIDNLPTTSTTTSTTTTSTTECTKNSEFVLAFNANDFEISRVIEIPKSNKDIQAQYINAIQTSYNGLPLGTVSLPPNGFSAINISTSGDNRTINRKPGYPCTAIEKNDASGDILIDNQFISIVIGSNGRIKSLIEKSANREVIKQDGSLGNRLIIFDDTCLFWDAWDQEIFSLEKPLSILEGTCKIIENGPLRCVVQVHYDSKGLPSGNGSVNQTIIVHFNSARVDFETNVNWNEAHKLLRVDFDTNIRAKNANYEIQFGHIERPTHYNTSWDFARFEVVGHKWADLSEYDFGMALLNDCKYGYSTLGGRIGLSLLRSPKSPDDTCDMGSHKFTYSIYPHRGSLQSASVIKEGYSLNNNFYISETPFSLASTTHIDKTFISTNKEAIIVDTIKKAEDGTSFVVRVYESFGGATTFNFTSSILPIPFKSIIECNGLEEVNQSSKSYKFNDTIKINPFEIKTFRFISN.

Positions 264, 266, 376, and 579 each coordinate Zn(2+). Asp-376 (nucleophile) is an active-site residue.

Belongs to the glycosyl hydrolase 38 family. It depends on Zn(2+) as a cofactor.

It carries out the reaction Hydrolysis of terminal, non-reducing alpha-D-mannose residues in alpha-D-mannosides.. In Dictyostelium discoideum (Social amoeba), this protein is Alpha-mannosidase G (manG).